We begin with the raw amino-acid sequence, 721 residues long: MAEKFESLMNIHGFDLGSRYMDLKPLGCGGNGLVFSAVDNDCDKRVAVKKIVLTDPQSVKHALREIKIIRRLDHDNIVKVFEILGPSGSQLTDDVGSLTELNCVYIVQEYMETDLANLLEQGPLLEDHARLFMYQLLRGLKYIHSANVLHRDLKPANLFINTEDLVLKIGDFGLARIMDPHYSHKGHLSEGLVTKWYRSPRLLLSPNNYTKAIDMWAAGCIFAEMLTGKTLFAGAHELEQMQLILESIPVVHEEDRQELLNVIPVYIRNDMTEPHKPLTQLLPGISPEALDFLEQILTFSPMDRLTAEEALSHPYMSIYSFPTDEPISSHPFHIEDEVDDILLMDESHSHIYNWERYHESQFSDHDWPIHNNYEADEVQRDPRALSDVTDEEEVQVDPRKYLDGDREKYLEDPAFDTHFSTEPCWQYSDHHENKYCDLECSHTCNYKMRSSSYLDNLVWRDSEVNHYYEPKLIIDLSNWKEQSKEKSDKKGKSKCEKNGLVKAQIALEEASQQLVEKEREKNQGFDFDSFIAETIQLSLQHEPTDVDKLNDLNSSVSQMESKGLISKSVSREKQEKGMANLAQLGALYQTSWESQFVSNGEECFLIDQFCCEVRKDEQVEKENTYTSYLDKFFSKKEDAEMLEPEPVEEGKLGEKERGESFLSNSGELFFNKQLEAIGIPQFHSPVGSPLKSIQATLTPSAMKSSPQIPHKTYSSILKHLN.

Residues 20–316 (YMDLKPLGCG…AEEALSHPYM (297 aa)) enclose the Protein kinase domain. Residues 26–34 (LGCGGNGLV) and K49 contribute to the ATP site. D152 (proton acceptor) is an active-site residue. T626 is modified (phosphothreonine). A TXY motif is present at residues 626–628 (TSY). Residue Y628 is modified to Phosphotyrosine.

The protein belongs to the protein kinase superfamily. CMGC Ser/Thr protein kinase family. MAP kinase subfamily. Mg(2+) serves as cofactor. In terms of processing, dually phosphorylated on Thr-626 and Tyr-628, which activates the enzyme.

It catalyses the reaction L-seryl-[protein] + ATP = O-phospho-L-seryl-[protein] + ADP + H(+). The enzyme catalyses L-threonyl-[protein] + ATP = O-phospho-L-threonyl-[protein] + ADP + H(+). With respect to regulation, activated by threonine and tyrosine phosphorylation. Phosphorylates microtubule-associated protein 2 (MAP2). May promote entry in the cell cycle. This Gallus gallus (Chicken) protein is Mitogen-activated protein kinase 6 (MAPK6).